Consider the following 185-residue polypeptide: Elongation factor P (185 aa).

Belongs to the elongation factor P family.

It localises to the cytoplasm. The protein operates within protein biosynthesis; polypeptide chain elongation. Its function is as follows. Involved in peptide bond synthesis. Stimulates efficient translation and peptide-bond synthesis on native or reconstituted 70S ribosomes in vitro. Probably functions indirectly by altering the affinity of the ribosome for aminoacyl-tRNA, thus increasing their reactivity as acceptors for peptidyl transferase. The sequence is that of Elongation factor P from Bacillus cereus (strain B4264).